The chain runs to 83 residues: Cytochrome b559 subunit alpha (83 aa).

Residues 21-35 (VIHSITIPSLFIAGW) form a helical membrane-spanning segment. Residue H23 participates in heme binding.

It belongs to the PsbE/PsbF family. In terms of assembly, heterodimer of an alpha subunit and a beta subunit. PSII is composed of 1 copy each of membrane proteins PsbA, PsbB, PsbC, PsbD, PsbE, PsbF, PsbH, PsbI, PsbJ, PsbK, PsbL, PsbM, PsbT, PsbX, PsbY, PsbZ, Psb30/Ycf12, at least 3 peripheral proteins of the oxygen-evolving complex and a large number of cofactors. It forms dimeric complexes. Requires heme b as cofactor.

The protein resides in the plastid. It is found in the chloroplast thylakoid membrane. This b-type cytochrome is tightly associated with the reaction center of photosystem II (PSII). PSII is a light-driven water:plastoquinone oxidoreductase that uses light energy to abstract electrons from H(2)O, generating O(2) and a proton gradient subsequently used for ATP formation. It consists of a core antenna complex that captures photons, and an electron transfer chain that converts photonic excitation into a charge separation. In Piper cenocladum (Ant piper), this protein is Cytochrome b559 subunit alpha.